Reading from the N-terminus, the 277-residue chain is Release factor glutamine methyltransferase (277 aa).

S-adenosyl-L-methionine is bound by residues 120–124 (GTGSG), Asp143, Trp171, and Asn186. 186–189 (NPPY) is a substrate binding site.

This sequence belongs to the protein N5-glutamine methyltransferase family. PrmC subfamily.

The catalysed reaction is L-glutaminyl-[peptide chain release factor] + S-adenosyl-L-methionine = N(5)-methyl-L-glutaminyl-[peptide chain release factor] + S-adenosyl-L-homocysteine + H(+). Methylates the class 1 translation termination release factors RF1/PrfA and RF2/PrfB on the glutamine residue of the universally conserved GGQ motif. This chain is Release factor glutamine methyltransferase, found in Coxiella burnetii (strain RSA 493 / Nine Mile phase I).